The sequence spans 598 residues: Transcriptional repressor tup12 (598 aa).

Residues 118-177 (IASGVVPQSSKTKHGRNSVSFGKYGNAGPFNSDNSSKPLILNNGSSGGTPKNLRSPAIDS) form a disordered region. WD repeat units follow at residues 285–325 (EPPI…AMVF), 332–371 (LITL…QQIR), 374–413 (DIAQ…RTVC), 415–454 (WDVE…KVIR), 456–495 (WTSS…NTIK), 510–549 (YKEG…RTIQ), and 552–585 (SPDS…ATGS).

Belongs to the WD repeat TUP1 family.

Transcriptional repressor. This is Transcriptional repressor tup12 (tup12) from Schizosaccharomyces pombe (strain 972 / ATCC 24843) (Fission yeast).